The primary structure comprises 448 residues: MNRALVLLLYVCTVSCLASSKVILMRNNITLSFDDIEANFAPSVKGTGEIGVVYVAEPLDACQNLMNKPEQSSNETSPFVLIVRGGCSFEEKVRKAQRAGFKAAIIYDNEDRGTLIAMAGNSGGIRIHAVFVTKETGEVLKEYAGFPDTKVWLIPSFENSAWSIMAVSFISLLAMSAVLATCFFVRRHRIRRRTSRSSRVREFHGMSRRLVKAMPSLIFSSFHEDNTTAFTCAICLEDYTVGDKLRLLPCCHKFHAACVDSWLTSWRTFCPVCKRDARTSTGEPPASESTPLLSSAASSFTSSSLHSSVRSSALLIGPSLGSLPTSISFSPAYASSSYIRQSFQSSSNRRSPPISVSRSSVDLRQQAASPSPSPSQRSYISHMASPQSLGYPTISPFNTRYMSPYRPSPSNASPAMAGSSNYPLNPLRYSESAGTFSPYASANSLPDC.

The signal sequence occupies residues 1–20 (MNRALVLLLYVCTVSCLASS). Residues 21 to 163 (KVILMRNNIT…IPSFENSAWS (143 aa)) lie on the Lumenal side of the membrane. N-linked (GlcNAc...) asparagine glycans are attached at residues asparagine 28 and asparagine 74. Positions 60 to 144 (DACQNLMNKP…ETGEVLKEYA (85 aa)) constitute a PA domain. Cysteine 62 and cysteine 87 are joined by a disulfide. The chain crosses the membrane as a helical span at residues 164-184 (IMAVSFISLLAMSAVLATCFF). Topologically, residues 185 to 448 (VRRHRIRRRT…YASANSLPDC (264 aa)) are cytoplasmic. The RING-type; atypical zinc-finger motif lies at 232 to 274 (CAICLEDYTVGDKLRLLPCCHKFHAACVDSWLTSWRTFCPVCK). Residues 344–378 (QSSSNRRSPPISVSRSSVDLRQQAASPSPSPSQRS) are compositionally biased toward low complexity. Disordered stretches follow at residues 344–380 (QSSSNRRSPPISVSRSSVDLRQQAASPSPSPSQRSYI) and 402–424 (MSPYRPSPSNASPAMAGSSNYPL). The segment covering 408-423 (SPSNASPAMAGSSNYP) has biased composition (polar residues).

It is found in the protein storage vacuole membrane. It localises to the golgi apparatus membrane. Functionally, involved in the trafficking of vacuolar proteins. May function as a sorting receptor for protein trafficking to the protein storage vacuole (PSV). The polypeptide is Receptor homology region, transmembrane domain- and RING domain-containing protein 2 (RMR2) (Arabidopsis thaliana (Mouse-ear cress)).